Reading from the N-terminus, the 218-residue chain is Ras-related protein Rab11E (218 aa).

20–27 (GDSGVGKS) contacts GTP. Positions 42-50 (SKSTIGVEF) match the Effector region motif. Residues 68-72 (DTAGQ) and 126-129 (NKSD) contribute to the GTP site. 2 S-geranylgeranyl cysteine lipidation sites follow: Cys-215 and Cys-216.

It belongs to the small GTPase superfamily. Rab family.

The protein resides in the cell membrane. This chain is Ras-related protein Rab11E (RAB11E), found in Lotus japonicus (Lotus corniculatus var. japonicus).